Reading from the N-terminus, the 335-residue chain is Capsular polysaccharide phosphotransferase WcwK (335 aa).

The protein belongs to the stealth family.

In Streptococcus pneumoniae, this protein is Capsular polysaccharide phosphotransferase WcwK (wcwK).